The chain runs to 905 residues: Methionine--tRNA ligase, cytoplasmic (905 aa).

The region spanning 1-75 is the GST N-terminal domain; the sequence is MKLFVGEGNP…YFYLSSGHDM (75 aa). The GST C-terminal domain occupies 72 to 199; sequence GHDMCDLSNQ…DKGSSVFKPF (128 aa). The 'HIGH' region motif lies at 271–281; the sequence is PYVNNVPHLGN. The short motif at 591 to 595 is the 'KMSKS' region element; sequence KFSKS. Lys-594 contacts ATP. Disordered regions lie at residues 813 to 874 and 886 to 905; these read RFGG…VIDP and LALA…KKKK. Residues 841–874 are compositionally biased toward basic and acidic residues; it reads GPERVKELMQELEKQGNHVRELKGKKAEKSVIDP. Positions 844–900 constitute a WHEP-TRS domain; it reads RVKELMQELEKQGNHVRELKGKKAEKSVIDPEVQKLLALKKELALAEGKSPDPPTQK.

The protein belongs to the class-I aminoacyl-tRNA synthetase family. Monomer. Part of a multisubunit complex that groups tRNA ligases for Arg (RARS1), Asp (DARS1), Gln (QARS1), Ile (IARS1), Leu (LARS1), Lys (KARS1), Met (MARS1) the bifunctional ligase for Glu and Pro (EPRS1) and the auxiliary subunits AIMP1/p43, AIMP2/p38 and EEF1E1/p18.

The protein localises to the cytoplasm. Its subcellular location is the cytosol. The protein resides in the nucleus. It localises to the nucleolus. It carries out the reaction tRNA(Met) + L-methionine + ATP = L-methionyl-tRNA(Met) + AMP + diphosphate. In terms of biological role, catalyzes the specific attachment of an amino acid to its cognate tRNA in a 2 step reaction: the amino acid (AA) is first activated by ATP to form AA-AMP and then transferred to the acceptor end of the tRNA. Plays a role in the synthesis of ribosomal RNA in the nucleolus. In Xenopus laevis (African clawed frog), this protein is Methionine--tRNA ligase, cytoplasmic (mars1).